The sequence spans 606 residues: MQQHDSDSFWGGIVKAMGLVFGDIGTSPIYTLTVVFALTEPTMQNVFGILSLVFWTMTILVTAEYAWLAMRLGRKGEGGAIVLKEILARMIRPGRQLTFVVFLTYLGVSLLMGDGVITPAISILSAVEGMVLIPGLGGLHQSWLILIAAIIAVGLFVFQFKGTDKVAGAFGPIMVVWFASLALSGAVSVASHPTVLFAVSPHYALQFLLDNGLAGFIVLSEVILCATGGEALYADMGHLGRKPIVRAWYIVFWALYLNYLGQGAFIISHPGAKNYLFGMVQHQAPLLYIPFLILTILATIIASQAMISGVFSIVYQGITTRILPLLKVDYTSSHLKSQIYIGSVNWMLMIAVVVIMLVFQKSENLAAAYGLAVTGSMSITGIMMILILSRTTKAWKAVFAALITVVDLVFFTACLHKLPHGGYWSIILASVPFITILVWTKGQRALYRALRPLELDTFELAYEQIYAKGRNIPGTGLFFVKEYNVVPPYVVHCIIRSNIIYERNVFISIVRTDEPFGLVSELKTGIATGLDAFEIHAGYMEHLEIETLLQQHGIKEKVIFYGVEDISTPNPVWKLFATIKRQTPNFVQFNKLPASRLQGVVTRVEM.

12 consecutive transmembrane segments (helical) span residues 18–38, 46–66, 97–117, 138–158, 166–186, 212–232, 247–267, 287–307, 339–359, 368–388, 395–415, and 418–438; these read GLVFGDIGTSPIYTLTVVFAL, VFGILSLVFWTMTILVTAEYA, LTFVVFLTYLGVSLLMGDGVI, GLHQSWLILIAAIIAVGLFVF, VAGAFGPIMVVWFASLALSGA, GLAGFIVLSEVILCATGGEAL, AWYIVFWALYLNYLGQGAFII, LYIPFLILTILATIIASQAMI, IYIGSVNWMLMIAVVVIMLVF, AYGLAVTGSMSITGIMMILIL, WKAVFAALITVVDLVFFTACL, and LPHGGYWSIILASVPFITILV.

Belongs to the HAK/KUP transporter (TC 2.A.72) family.

It localises to the cell inner membrane. The enzyme catalyses K(+)(in) + H(+)(in) = K(+)(out) + H(+)(out). Its function is as follows. Transport of potassium into the cell. Likely operates as a K(+):H(+) symporter. In Trichlorobacter lovleyi (strain ATCC BAA-1151 / DSM 17278 / SZ) (Geobacter lovleyi), this protein is Probable potassium transport system protein Kup.